We begin with the raw amino-acid sequence, 342 residues long: MNKETLILAIETSCDETSVSVIKNGNSILSNIVLSQIESHKRFGGVVPEVASRHHVEGITTTIEEALTTANISMNDIDAIAVTQGPGLIGALLIGINAAKALAFAYDKPLIPVHHIAGHIYANHLEEPLTFPLITLIVSGGHTELVYMKSHMHFEVIGETRDDAVGEAYDKVARTIDLPYPGGPQIDKLAQYGKDTYDFPRVWLEKESYDFSFSGLKSSVINKLHNLRQKNEEVVKEDVATSFQNSVVDVLSTKAINACKAYKVNRLIVAGGVASNKGLRYRLQQLCEDNNIHLSIPSPKLCTDNAAMIGAAAYYYYQSGITAKLDLNGENNMDIEEATIEV.

Fe cation is bound by residues H115 and H119. Residues 137–141 (IVSGG), D170, G183, D187, and N276 each bind substrate. D304 is a binding site for Fe cation.

Belongs to the KAE1 / TsaD family. It depends on Fe(2+) as a cofactor.

The protein localises to the cytoplasm. It carries out the reaction L-threonylcarbamoyladenylate + adenosine(37) in tRNA = N(6)-L-threonylcarbamoyladenosine(37) in tRNA + AMP + H(+). Required for the formation of a threonylcarbamoyl group on adenosine at position 37 (t(6)A37) in tRNAs that read codons beginning with adenine. Is involved in the transfer of the threonylcarbamoyl moiety of threonylcarbamoyl-AMP (TC-AMP) to the N6 group of A37, together with TsaE and TsaB. TsaD likely plays a direct catalytic role in this reaction. The sequence is that of tRNA N6-adenosine threonylcarbamoyltransferase from Staphylococcus haemolyticus (strain JCSC1435).